The primary structure comprises 230 residues: RING finger protein 141 (230 aa).

Residue glycine 2 is the site of N-myristoyl glycine attachment. The segment at 155 to 192 adopts an RING-type zinc-finger fold; sequence CCICMDGRADLILPCAHSFCQKCIDKWSDRHRNCPICR.

It localises to the membrane. Functionally, may be involved in spermatogenesis. This chain is RING finger protein 141 (RNF141), found in Bos taurus (Bovine).